Here is a 352-residue protein sequence, read N- to C-terminus: Outer membrane protein assembly factor BamC (352 aa).

The first 24 residues, 1 to 24 (MAISLQKSTVVKVVGVSLVMLLAA), serve as a signal peptide directing secretion. Cys25 carries N-palmitoyl cysteine lipidation. The S-diacylglycerol cysteine moiety is linked to residue Cys25.

The protein belongs to the BamC family. As to quaternary structure, part of the Bam complex, which is composed of the outer membrane protein BamA, and four lipoproteins BamB, BamC, BamD and BamE.

Its subcellular location is the cell outer membrane. Functionally, part of the outer membrane protein assembly complex, which is involved in assembly and insertion of beta-barrel proteins into the outer membrane. In Yersinia pestis, this protein is Outer membrane protein assembly factor BamC.